The following is a 198-amino-acid chain: Single-stranded DNA cytosine deaminase (198 aa).

Positions 1–30 match the Bipartite nuclear localization signal motif; sequence MDSLLMKQKKFLYHFKNVRWAKGRHETYLC. Positions 2 to 26 are interaction with SUPT6H; it reads DSLLMKQKKFLYHFKNVRWAKGRHE. A CMP/dCMP-type deaminase domain is found at 23–129; the sequence is GRHETYLCYV…KAEPEGLRRL (107 aa). Residue threonine 27 is modified to Phosphothreonine; by PKA. Position 38 is a phosphoserine; by PKA (serine 38). Positions 39-42 are important for interaction with CTNNBL1; that stretch reads ATSC. Histidine 56 contacts Zn(2+). The Proton donor role is filled by glutamate 58. Residues cysteine 87 and cysteine 90 each contribute to the Zn(2+) site. Positions 88–116 are required for interaction with RNF126; the sequence is YDCARHVAEFLRWNPNLSLRIFTARLYFC. A Nuclear export signal motif is present at residues 183–198; the sequence is LYEVDDLRDAFRMLGF.

The protein belongs to the cytidine and deoxycytidylate deaminase family. In terms of assembly, interacts with CTNNBL1; the interaction is important for the immunoglobulin switch activity of AICDA. Interacts (via its NLS) with KPNA1. Interacts with PKA/PRKACA and PRKAR1A/PKR1. Interacts with SUPT6H, TRIM28 and NCL. Directly interacts with MCM3AP/GANP; this interaction may favor AICDA recruitment to immunoglobulin variable region genes, hence promoting somatic hypermutations. Zn(2+) is required as a cofactor. Ser-38 is the major site whereas Thr-27 is the minor site of phosphorylation. Phosphorylation regulates its class-switch recombination activity. Post-translationally, probably monoubiquitinated on several residues by RNF126. As to expression, expressed in germinal center B-cells (at protein level).

The protein localises to the nucleus. Its subcellular location is the cytoplasm. The enzyme catalyses a 2'-deoxycytidine in single-stranded DNA + H2O + H(+) = a 2'-deoxyuridine in single-stranded DNA + NH4(+). Its function is as follows. Single-stranded DNA-specific cytidine deaminase. Involved in somatic hypermutation (SHM), gene conversion, and class-switch recombination (CSR) in B-lymphocytes by deaminating C to U during transcription of Ig-variable (V) and Ig-switch (S) region DNA. Required for several crucial steps of B-cell terminal differentiation necessary for efficient antibody responses. May also play a role in the epigenetic regulation of gene expression by participating in DNA demethylation. This chain is Single-stranded DNA cytosine deaminase (Aicda), found in Mus musculus (Mouse).